A 92-amino-acid chain; its full sequence is Co-chaperonin GroES (92 aa).

Belongs to the GroES chaperonin family. In terms of assembly, heptamer of 7 subunits arranged in a ring. Interacts with the chaperonin GroEL.

The protein resides in the cytoplasm. Functionally, together with the chaperonin GroEL, plays an essential role in assisting protein folding. The GroEL-GroES system forms a nano-cage that allows encapsulation of the non-native substrate proteins and provides a physical environment optimized to promote and accelerate protein folding. GroES binds to the apical surface of the GroEL ring, thereby capping the opening of the GroEL channel. This chain is Co-chaperonin GroES, found in Methanosarcina barkeri (strain Fusaro / DSM 804).